The sequence spans 592 residues: Protein kinase C zeta type (592 aa).

The 84-residue stretch at 15-98 (RVRLKAHYGG…EVLIIHVFPS (84 aa)) folds into the PB1 domain. Residues 79 to 145 (AFRLVCQGRD…KRFNRGAYCG (67 aa)) form an interaction with SQSTM1 region. A Phorbol-ester/DAG-type zinc finger spans residues 130 to 180 (GHLFQAKRFNRGAYCGQCSERIWGLSRQGYRCINCKLLVHKRCHVLVPLTC). The 267-residue stretch at 252–518 (FDLIRVIGRG…FSDIKSHAFF (267 aa)) folds into the Protein kinase domain. ATP contacts are provided by residues 258 to 266 (IGRGSYAKV) and lysine 281. The active-site Proton acceptor is aspartate 376. The residue at position 410 (threonine 410) is a Phosphothreonine; by PDPK1 and PI3K. The AGC-kinase C-terminal domain maps to 519–590 (RSIDWDLLEK…INPLLLSAEE (72 aa)). The residue at position 560 (threonine 560) is a Phosphothreonine. Serine 591 is modified (phosphoserine).

It belongs to the protein kinase superfamily. AGC Ser/Thr protein kinase family. PKC subfamily. As to quaternary structure, interacts directly with SQSTM1. Forms a ternary complex with SQSTM1 and KCNAB2. Forms another ternary complex with SQSTM1 and GABRR3. Forms a complex with SQSTM1 and MAP2K5. Interacts with PARD6A, PARD6B and PARD6G. Part of a complex with PARD3, PARD6A or PARD6B or PARD6G and CDC42 or RAC1. Interacts with ADAP1/CENTA1. Interacts (via the protein kinase domain) with WWC1. Forms a tripartite complex with WWC1 and DDR1, but predominantly in the absence of collagen. Interacts with PDPK1 (via N-terminal region). Interacts with WDFY2 (via WD repeats 1-3). Interacts with VAMP2. Forms a complex with WDFY2 and VAMP2. Interacts with APPL1. Interacts with WWC1, WWC2 and WWC3. CDH5 is required for its phosphorylation at Thr-410. Phosphorylated by protein kinase PDPK1; phosphorylation is inhibited by the apoptotic C-terminal cleavage product of PKN2. Phosphorylation at Thr-410 by PI3K activates the kinase. In terms of tissue distribution, isoform 1: In brain, highly expressed in cerebellar granule neurons and cerebellar astrocytes (at protein level). Expressed at low levels in testes, lung and kidney. Isoform 2: Specifically expressed in brain where it localizes to cerebellar granule neurons (at protein level).

The protein resides in the cytoplasm. It is found in the endosome. The protein localises to the cell junction. Its subcellular location is the membrane. It catalyses the reaction L-seryl-[protein] + ATP = O-phospho-L-seryl-[protein] + ADP + H(+). The enzyme catalyses L-threonyl-[protein] + ATP = O-phospho-L-threonyl-[protein] + ADP + H(+). Its activity is regulated as follows. Atypical PKCs (PRKCI and PRKCZ) exhibit an elevated basal enzymatic activity (that may be due to the interaction with SMG1 or SQSTM1) and are not regulated by diacylglycerol, phosphatidylserine, phorbol esters or calcium ions. Two specific sites, Thr-410 (activation loop of the kinase domain) and Thr-560 (turn motif), need to be phosphorylated for its full activation. Phosphatidylinositol 3,4,5-trisphosphate might be a physiological activator. Isoform 2: Constitutively active. Functionally, calcium- and diacylglycerol-independent serine/threonine-protein kinase that functions in phosphatidylinositol 3-kinase (PI3K) pathway and mitogen-activated protein (MAP) kinase cascade, and is involved in NF-kappa-B activation, mitogenic signaling, cell proliferation, cell polarity, inflammatory response and maintenance of long-term potentiation (LTP). Upon lipopolysaccharide (LPS) treatment in macrophages, or following mitogenic stimuli, functions downstream of PI3K to activate MAP2K1/MEK1-MAPK1/ERK2 signaling cascade independently of RAF1 activation. Required for insulin-dependent activation of AKT3, but may function as an adapter rather than a direct activator. Upon insulin treatment may act as a downstream effector of PI3K and contribute to the activation of translocation of the glucose transporter SLC2A4/GLUT4 and subsequent glucose transport in adipocytes. In EGF-induced cells, binds and activates MAP2K5/MEK5-MAPK7/ERK5 independently of its kinase activity and can activate JUN promoter through MEF2C. Through binding with SQSTM1/p62, functions in interleukin-1 signaling and activation of NF-kappa-B with the specific adapters RIPK1 and TRAF6. Participates in TNF-dependent transactivation of NF-kappa-B by phosphorylating and activating IKBKB kinase, which in turn leads to the degradation of NF-kappa-B inhibitors. In migrating astrocytes, forms a cytoplasmic complex with PARD6A and is recruited by CDC42 to function in the establishment of cell polarity along with the microtubule motor and dynein. In association with FEZ1, stimulates neuronal differentiation in PC12 cells. In the inflammatory response, is required for the T-helper 2 (Th2) differentiation process, including interleukin production, efficient activation of JAK1 and the subsequent phosphorylation and nuclear translocation of STAT6. May be involved in development of allergic airway inflammation (asthma), a process dependent on Th2 immune response. In the NF-kappa-B-mediated inflammatory response, can relieve SETD6-dependent repression of NF-kappa-B target genes by phosphorylating the RELA subunit at 'Ser-311'. Phosphorylates VAMP2 in vitro. Phosphorylates and activates LRRK1, which phosphorylates RAB proteins involved in intracellular trafficking. In terms of biological role, involved in late synaptic long term potentiation phase in CA1 hippocampal cells and long term memory maintenance. This chain is Protein kinase C zeta type (Prkcz), found in Mus musculus (Mouse).